The chain runs to 291 residues: N-acetylmannosamine kinase (291 aa).

Residues 5-12 (AVDIGGTK) and 132-139 (GVGGGIVV) each bind ATP. The Zn(2+) site is built by His-156, Cys-166, Cys-168, and Cys-173.

This sequence belongs to the ROK (NagC/XylR) family. NanK subfamily. As to quaternary structure, homodimer.

The catalysed reaction is an N-acyl-D-mannosamine + ATP = an N-acyl-D-mannosamine 6-phosphate + ADP + H(+). Its pathway is amino-sugar metabolism; N-acetylneuraminate degradation; D-fructose 6-phosphate from N-acetylneuraminate: step 2/5. Its function is as follows. Catalyzes the phosphorylation of N-acetylmannosamine (ManNAc) to ManNAc-6-P. This chain is N-acetylmannosamine kinase (nanK2), found in Escherichia coli O6:H1 (strain CFT073 / ATCC 700928 / UPEC).